Reading from the N-terminus, the 82-residue chain is RNA-binding protein GTNG_0100 (82 aa).

Belongs to the eukaryotic ribosomal protein eL8 family.

The polypeptide is RNA-binding protein GTNG_0100 (Geobacillus thermodenitrificans (strain NG80-2)).